A 163-amino-acid polypeptide reads, in one-letter code: Ribonuclease H (163 aa).

The region spanning 4-146 (SPKKVLIYTD…CDRLAVRASQ (143 aa)) is the RNase H type-1 domain. The Mg(2+) site is built by D13, E51, D73, and D138.

Belongs to the RNase H family. As to quaternary structure, monomer. Requires Mg(2+) as cofactor.

It localises to the cytoplasm. The catalysed reaction is Endonucleolytic cleavage to 5'-phosphomonoester.. Its function is as follows. Endonuclease that specifically degrades the RNA of RNA-DNA hybrids. The sequence is that of Ribonuclease H from Rippkaea orientalis (strain PCC 8801 / RF-1) (Cyanothece sp. (strain PCC 8801)).